The primary structure comprises 224 residues: Small ribosomal subunit protein uS7 (224 aa).

It belongs to the universal ribosomal protein uS7 family. As to quaternary structure, part of the 30S ribosomal subunit.

One of the primary rRNA binding proteins, it binds directly to 16S rRNA where it nucleates assembly of the head domain of the 30S subunit. Is located at the subunit interface close to the decoding center. This is Small ribosomal subunit protein uS7 from Caldivirga maquilingensis (strain ATCC 700844 / DSM 13496 / JCM 10307 / IC-167).